A 287-amino-acid chain; its full sequence is Shikimate kinase 3, chloroplastic (287 aa).

The N-terminal 57 residues, 1 to 57 (MDAGVGLRAKPGAWAGLGNPRRSSTARVPVRFAVEKFAQPLVLGSDRRSCGAKLKVS), are a transit peptide targeting the chloroplast. 98–105 (GMMGSGKT) contributes to the ATP binding site. Thr105 contacts Mg(2+). Substrate is bound by residues Asp123, Arg148, and Gly170. Position 209 (Arg209) interacts with ATP.

The protein belongs to the shikimate kinase family. Mg(2+) is required as a cofactor. In terms of tissue distribution, expressed in panicles.

The protein localises to the plastid. It is found in the chloroplast. It catalyses the reaction shikimate + ATP = 3-phosphoshikimate + ADP + H(+). Its pathway is metabolic intermediate biosynthesis; chorismate biosynthesis; chorismate from D-erythrose 4-phosphate and phosphoenolpyruvate: step 5/7. In terms of biological role, catalyzes the specific phosphorylation of the 3-hydroxyl group of shikimic acid using ATP as a cosubstrate. This is Shikimate kinase 3, chloroplastic (SK3) from Oryza sativa subsp. japonica (Rice).